Consider the following 260-residue polypeptide: Triosephosphate isomerase (260 aa).

11–13 (NWK) is a binding site for substrate. The active-site Electrophile is the H103. The Proton acceptor role is filled by E175. Substrate is bound by residues G181, S220, and 241–242 (GG).

It belongs to the triosephosphate isomerase family. As to quaternary structure, homodimer.

Its subcellular location is the cytoplasm. It carries out the reaction D-glyceraldehyde 3-phosphate = dihydroxyacetone phosphate. It participates in carbohydrate biosynthesis; gluconeogenesis. It functions in the pathway carbohydrate degradation; glycolysis; D-glyceraldehyde 3-phosphate from glycerone phosphate: step 1/1. In terms of biological role, involved in the gluconeogenesis. Catalyzes stereospecifically the conversion of dihydroxyacetone phosphate (DHAP) to D-glyceraldehyde-3-phosphate (G3P). The sequence is that of Triosephosphate isomerase from Shewanella halifaxensis (strain HAW-EB4).